The chain runs to 152 residues: MKCPFCGHADTQVVDSRVSEDGASIRRRRRCLECDKRFTTFETAEVRMPQVVKQDGHRAEFSDAKLRTGFTRALHKRPVPTPLVDEAVGRVKQKLLQLGEREVSARQIGEMVMSELARLDKVAYVRFASVYRSFQDVAEFSDAIREITHDKD.

A zinc finger lies at 3 to 34; that stretch reads CPFCGHADTQVVDSRVSEDGASIRRRRRCLEC. The ATP-cone domain maps to 49-139; sequence PQVVKQDGHR…VYRSFQDVAE (91 aa).

It belongs to the NrdR family. Requires Zn(2+) as cofactor.

Its function is as follows. Negatively regulates transcription of bacterial ribonucleotide reductase nrd genes and operons by binding to NrdR-boxes. The chain is Transcriptional repressor NrdR from Laribacter hongkongensis (strain HLHK9).